A 567-amino-acid polypeptide reads, in one-letter code: Putative laccase-17 (567 aa).

The first 22 residues, 1–22, serve as a signal peptide directing secretion; that stretch reads MPSRGCSCWLLSLALLCSLAAA. Plastocyanin-like domains are found at residues 30–146 and 158–310; these read VIRE…PRDG and ELAP…YGAA. The N-linked (GlcNAc...) asparagine glycan is linked to N76. H80, H82, H125, and H127 together coordinate Cu cation. N187, N241, N298, N312, N327, N365, N368, N378, N388, and N430 each carry an N-linked (GlcNAc...) asparagine glycan. Positions 415-551 constitute a Plastocyanin-like 3 domain; the sequence is DFPANPPVQF…AMAFLVDDGV (137 aa). Residues H468, H471, H473, H530, C531, H532, and H536 each contribute to the Cu cation site.

The protein belongs to the multicopper oxidase family. Cu cation serves as cofactor.

It localises to the secreted. Its subcellular location is the extracellular space. It is found in the apoplast. The enzyme catalyses 4 hydroquinone + O2 = 4 benzosemiquinone + 2 H2O. Its function is as follows. Lignin degradation and detoxification of lignin-derived products. This Oryza sativa subsp. japonica (Rice) protein is Putative laccase-17 (LAC17).